A 415-amino-acid polypeptide reads, in one-letter code: Lupus La protein homolog (415 aa).

One can recognise an HTH La-type RNA-binding domain in the interval 7 to 99; it reads NEKMAALEAK…RRSPSRPLPE (93 aa). Residues Ser-92 and Ser-94 each carry the phosphoserine modification. Residues 111-187 form the RRM domain; that stretch reads RSVYIKGFPT…TNLLILFKED (77 aa). Position 116 is an N6-acetyllysine (Lys-116). A Phosphothreonine modification is found at Thr-120. N6-acetyllysine occurs at positions 128 and 327. Positions 226 to 343 constitute a xRRM domain; that stretch reads EGKMGCLLKF…HAARRFKGSH (118 aa). A disordered region spans residues 323–415; sequence ESLNKWKSKG…KKRENGARDK (93 aa). The segment covering 328-341 has biased composition (basic residues); that stretch reads WKSKGGHAARRFKG. Lys-356 is subject to N6-acetyllysine. Residue Thr-377 is modified to Phosphothreonine. Over residues 377 to 415 the composition is skewed to basic and acidic residues; it reads TRFDDDDHRRGPVKRGIDGRDREEPASKHKKRENGARDK.

Interacts with DDX15. May interact with RUFY1. Post-translationally, phosphorylated.

The protein resides in the nucleus. Binds to the 3' poly(U) terminus of nascent RNA polymerase III transcripts, protecting them from exonuclease digestion and facilitating their folding and maturation. The polypeptide is Lupus La protein homolog (Ssb) (Rattus norvegicus (Rat)).